The sequence spans 298 residues: Putative S-adenosyl-L-methionine-dependent methyltransferase MSMEG_1480/MSMEI_1444 (298 aa).

Residues Asp127 and 156-157 each bind S-adenosyl-L-methionine; that span reads DL.

The protein belongs to the UPF0677 family.

Functionally, exhibits S-adenosyl-L-methionine-dependent methyltransferase activity. This chain is Putative S-adenosyl-L-methionine-dependent methyltransferase MSMEG_1480/MSMEI_1444, found in Mycolicibacterium smegmatis (strain ATCC 700084 / mc(2)155) (Mycobacterium smegmatis).